A 593-amino-acid polypeptide reads, in one-letter code: Elongation factor 4 (593 aa).

The region spanning 2–181 (DKIRNFCIIA…AVIERIPHPQ (180 aa)) is the tr-type G domain. GTP is bound by residues 14–19 (DHGKST) and 128–131 (NKCD).

The protein belongs to the TRAFAC class translation factor GTPase superfamily. Classic translation factor GTPase family. LepA subfamily.

It localises to the cell inner membrane. The catalysed reaction is GTP + H2O = GDP + phosphate + H(+). In terms of biological role, required for accurate and efficient protein synthesis under certain stress conditions. May act as a fidelity factor of the translation reaction, by catalyzing a one-codon backward translocation of tRNAs on improperly translocated ribosomes. Back-translocation proceeds from a post-translocation (POST) complex to a pre-translocation (PRE) complex, thus giving elongation factor G a second chance to translocate the tRNAs correctly. Binds to ribosomes in a GTP-dependent manner. In Bacteroides fragilis (strain ATCC 25285 / DSM 2151 / CCUG 4856 / JCM 11019 / LMG 10263 / NCTC 9343 / Onslow / VPI 2553 / EN-2), this protein is Elongation factor 4.